We begin with the raw amino-acid sequence, 188 residues long: Adenine phosphoribosyltransferase (188 aa).

The protein belongs to the purine/pyrimidine phosphoribosyltransferase family. In terms of assembly, homodimer.

It localises to the cytoplasm. It carries out the reaction AMP + diphosphate = 5-phospho-alpha-D-ribose 1-diphosphate + adenine. It participates in purine metabolism; AMP biosynthesis via salvage pathway; AMP from adenine: step 1/1. In terms of biological role, catalyzes a salvage reaction resulting in the formation of AMP, that is energically less costly than de novo synthesis. The protein is Adenine phosphoribosyltransferase of Burkholderia cenocepacia (strain HI2424).